The sequence spans 98 residues: Sm-like protein LSM3B (98 aa).

Residue S2 is modified to N-acetylserine. The 86-residue stretch at 11–96 (EPLDLIRLSL…VILVSPPLRT (86 aa)) folds into the Sm domain.

It belongs to the snRNP Sm proteins family. In terms of assembly, component of the heptameric LSM1-LSM7 complex that forms a seven-membered ring structure with a donut shape. The LSM subunits are arranged in the order LSM1, LSM2, LSM3, LSM6, LSM5, LSM7 and LSM4. Component of the heptameric LSM2-LSM8 complex that forms a seven-membered ring structure with a donut shape. The LSM subunits are arranged in the order LSM8, LSM2, LSM3, LSM6, LSM5, LSM7 and LSM4. LSM3B subunit interacts only with its two neighboring subunits, LSM2 and LSM6A or LSM6B. In terms of tissue distribution, expressed in roots, leaves, stems, flowers and siliques.

The protein resides in the cytoplasm. Its subcellular location is the nucleus. Component of LSM protein complexes, which are involved in RNA processing. Component of the cytoplasmic LSM1-LSM7 complex which is involved in mRNA degradation by promoting decapping and leading to accurate 5'-3' mRNA decay. The cytoplasmic LSM1-LSM7 complex regulates developmental gene expression by the decapping of specific development-related transcripts. Component of the nuclear LSM2-LSM8 complex which is involved splicing nuclear mRNAs. LSM2-LSM8 binds directly to the U6 small nuclear RNAs (snRNAs) and is essential for accurate splicing of selected development-related mRNAs through the stabilization of the spliceosomal U6 snRNA. Plays a critical role in the regulation of development-related gene expression. This is Sm-like protein LSM3B from Arabidopsis thaliana (Mouse-ear cress).